The following is a 281-amino-acid chain: Streptomycin biosynthesis protein StrF (281 aa).

The protein operates within antibiotic biosynthesis; streptomycin biosynthesis. May be involved in the formation of N-methyl-L-glucosamine. The protein is Streptomycin biosynthesis protein StrF (strF) of Streptomyces griseus.